The following is a 245-amino-acid chain: 1-(5-phosphoribosyl)-5-[(5-phosphoribosylamino)methylideneamino] imidazole-4-carboxamide isomerase (245 aa).

D7 serves as the catalytic Proton acceptor. D129 (proton donor) is an active-site residue.

This sequence belongs to the HisA/HisF family.

Its subcellular location is the cytoplasm. It carries out the reaction 1-(5-phospho-beta-D-ribosyl)-5-[(5-phospho-beta-D-ribosylamino)methylideneamino]imidazole-4-carboxamide = 5-[(5-phospho-1-deoxy-D-ribulos-1-ylimino)methylamino]-1-(5-phospho-beta-D-ribosyl)imidazole-4-carboxamide. Its pathway is amino-acid biosynthesis; L-histidine biosynthesis; L-histidine from 5-phospho-alpha-D-ribose 1-diphosphate: step 4/9. This Shigella boydii serotype 18 (strain CDC 3083-94 / BS512) protein is 1-(5-phosphoribosyl)-5-[(5-phosphoribosylamino)methylideneamino] imidazole-4-carboxamide isomerase.